Reading from the N-terminus, the 212-residue chain is Uracil phosphoribosyltransferase (212 aa).

5-phospho-alpha-D-ribose 1-diphosphate contacts are provided by residues Arg78, Arg103, and 130-138 (DPMLATGSS). Uracil-binding positions include Ile193 and 198 to 200 (GDA). Asp199 contributes to the 5-phospho-alpha-D-ribose 1-diphosphate binding site.

This sequence belongs to the UPRTase family. Requires Mg(2+) as cofactor.

The catalysed reaction is UMP + diphosphate = 5-phospho-alpha-D-ribose 1-diphosphate + uracil. The protein operates within pyrimidine metabolism; UMP biosynthesis via salvage pathway; UMP from uracil: step 1/1. Allosterically activated by GTP. Catalyzes the conversion of uracil and 5-phospho-alpha-D-ribose 1-diphosphate (PRPP) to UMP and diphosphate. This Pseudomonas syringae pv. tomato (strain ATCC BAA-871 / DC3000) protein is Uracil phosphoribosyltransferase.